Reading from the N-terminus, the 880-residue chain is Protein translocase subunit SecA (880 aa).

ATP is bound by residues Q87, 105–109 (GEGKT), and D501. Residues C864, C866, C875, and H876 each contribute to the Zn(2+) site.

It belongs to the SecA family. Monomer and homodimer. Part of the essential Sec protein translocation apparatus which comprises SecA, SecYEG and auxiliary proteins SecDF-YajC and YidC. The cofactor is Zn(2+).

It is found in the cell inner membrane. It localises to the cytoplasm. It catalyses the reaction ATP + H2O + cellular proteinSide 1 = ADP + phosphate + cellular proteinSide 2.. Functionally, part of the Sec protein translocase complex. Interacts with the SecYEG preprotein conducting channel. Has a central role in coupling the hydrolysis of ATP to the transfer of proteins into and across the cell membrane, serving both as a receptor for the preprotein-SecB complex and as an ATP-driven molecular motor driving the stepwise translocation of polypeptide chains across the membrane. The sequence is that of Protein translocase subunit SecA from Orientia tsutsugamushi (strain Boryong) (Rickettsia tsutsugamushi).